Consider the following 205-residue polypeptide: Probable molybdenum cofactor guanylyltransferase (205 aa).

GTP contacts are provided by residues 10 to 12 (LAG), lysine 22, aspartate 69, and aspartate 100. Aspartate 100 serves as a coordination point for Mg(2+).

It belongs to the MobA family. The cofactor is Mg(2+).

It localises to the cytoplasm. The enzyme catalyses Mo-molybdopterin + GTP + H(+) = Mo-molybdopterin guanine dinucleotide + diphosphate. Its function is as follows. Transfers a GMP moiety from GTP to Mo-molybdopterin (Mo-MPT) cofactor (Moco or molybdenum cofactor) to form Mo-molybdopterin guanine dinucleotide (Mo-MGD) cofactor. The chain is Probable molybdenum cofactor guanylyltransferase from Natranaerobius thermophilus (strain ATCC BAA-1301 / DSM 18059 / JW/NM-WN-LF).